Here is a 478-residue protein sequence, read N- to C-terminus: SPbeta prophage-derived uncharacterized protein YonD (478 aa).

Positions 326–419 form a coiled coil; it reads IQSQLNQKDE…KFSTEEVQNL (94 aa).

The protein is SPbeta prophage-derived uncharacterized protein YonD (yonD) of Bacillus subtilis (strain 168).